The sequence spans 92 residues: Small ribosomal subunit protein uS19c (92 aa).

Belongs to the universal ribosomal protein uS19 family.

It is found in the plastid. The protein resides in the chloroplast. Its function is as follows. Protein S19 forms a complex with S13 that binds strongly to the 16S ribosomal RNA. The protein is Small ribosomal subunit protein uS19c of Phalaenopsis aphrodite subsp. formosana (Moth orchid).